Here is a 161-residue protein sequence, read N- to C-terminus: Interleukin-17F (161 aa).

A signal peptide spans methionine 1 to alanine 28. Asparagine 83 is a glycosylation site (N-linked (GlcNAc...) asparagine). Cystine bridges form between cysteine 100-cysteine 150 and cysteine 105-cysteine 152.

Belongs to the IL-17 family. In terms of assembly, homodimer; disulfide-linked. Heterodimer with IL17A (IL17A-IL17F). Forms complexes with IL17RA and IL17RC receptors with 2:1 binding stoichiometry: two receptor chains for one interleukin molecule. IL17F homodimer forms predominantly complexes with IL17RC homodimer, whereas IL17A-IL17F favors complexes with IL17RA-IL17RC. IL17RA and IL17RC chains cannot distinguish between IL17A and IL17F molecules, potentially enabling the formation of topologically distinct complexes. As to expression, expressed by T-helper 17 cells (Th17) (at protein level). The expression pattern reflects the differentiation state. In fully differentiated Th17 cells, IL17A-IL17F heterodimers are produced at higher levels than IL17A-IL17A and IL17F-IL17F dimers. Dominantly secreted in intestine. Expressed by resident cells of the lamina propria, both epithelial cells and immune cell subsets including natural killer cells, dendritic cells, macrophages and various T and B cell subsets. Expressed by epithelial cells and innate immune cells in the colon. Expressed in group 3 innate lymphoid cells.

It is found in the secreted. In terms of biological role, effector cytokine of innate and adaptive immune system involved in antimicrobial host defense and maintenance of tissue integrity. IL17A-IL17F signals via IL17RA-IL17RC heterodimeric receptor complex, triggering homotypic interaction of IL17RA and IL17RC chains with TRAF3IP2 adapter through SEFIR domains. This leads to downstream TRAF6-mediated activation of NF-kappa-B and MAPkinase pathways ultimately resulting in transcriptional activation of cytokines, chemokines, antimicrobial peptides and matrix metalloproteinases, with potential strong immune inflammation. IL17A-IL17F is primarily involved in host defense against extracellular bacteria and fungi by inducing neutrophilic inflammation. As signature effector cytokine of T-helper 17 cells (Th17), primarily induces neutrophil activation and recruitment at infection and inflammatory sites. Stimulates the production of antimicrobial beta-defensins DEFB1, DEFB103A, and DEFB104A by mucosal epithelial cells, limiting the entry of microbes through the epithelial barriers. IL17F homodimer can signal via IL17RC homodimeric receptor complex, triggering downstream activation of TRAF6 and NF-kappa-B signaling pathway. Via IL17RC induces transcriptional activation of IL33, a potent cytokine that stimulates group 2 innate lymphoid cells and adaptive T-helper 2 cells involved in pulmonary allergic response to fungi. Likely via IL17RC, promotes sympathetic innervation of peripheral organs by coordinating the communication between gamma-delta T cells and parenchymal cells. Stimulates sympathetic innervation of thermogenic adipose tissue by driving TGFB1 expression. Regulates the composition of intestinal microbiota and immune tolerance by inducing antimicrobial proteins that specifically control the growth of commensal Firmicutes and Bacteroidetes. This chain is Interleukin-17F (Il17f), found in Mus musculus (Mouse).